A 444-amino-acid chain; its full sequence is Orexin receptor type 2 (444 aa).

A compositionally biased stretch (basic and acidic residues) spans 1–10 (MSGTKLEDSP). The tract at residues 1-30 (MSGTKLEDSPPCRNWSSAPELNETQEPFLN) is disordered. The Extracellular segment spans residues 1 to 54 (MSGTKLEDSPPCRNWSSAPELNETQEPFLNPTDYDDEEFLRYLWREYLHPKEYE). N-linked (GlcNAc...) asparagine glycans are attached at residues N14 and N22. Residues 14 to 27 (NWSSAPELNETQEP) show a composition bias toward polar residues. A required for response to orexin-A region spans residues 33–49 (DYDDEEFLRYLWREYLH). A helical membrane pass occupies residues 55 to 75 (WVLIAGYIIVFVVALVGNVLV). Residues 76-88 (CVAVWKNHHMRTV) are Cytoplasmic-facing. The chain crosses the membrane as a helical span at residues 89–110 (TNYFIVNLSLADVLVTITCLPA). Residues 111–127 (TLVVDITETWFFGQSLC) are Extracellular-facing. The cysteines at positions 127 and 210 are disulfide-linked. The helical transmembrane segment at 128 to 150 (KVIPYLQTVSVSVSVLTLSCIAL) threads the bilayer. Residues 151–170 (DRWYAICHPLMFKSTAKRAR) are Cytoplasmic-facing. The helical transmembrane segment at 171–191 (NSIVIIWIVSCIIMIPQAIVM) threads the bilayer. Topologically, residues 192–222 (ECSTMLPGLANKTTLFTVCDERWGGEIYPKM) are extracellular. N-linked (GlcNAc...) asparagine glycosylation is present at N202. A helical transmembrane segment spans residues 223–243 (YHICFFLVTYMAPLCLMVLAY). The Cytoplasmic segment spans residues 244 to 304 (LQIFRKLWCR…QIRARRKTAR (61 aa)). Residues 305 to 326 (MLMVVLLVFAICYLPISILNVL) form a helical membrane-spanning segment. Residues 327–342 (KRVFGMFTHTEDRETV) lie on the Extracellular side of the membrane. The helical transmembrane segment at 343–366 (YAWFTFSHWLVYANSAANPIIYNF) threads the bilayer. Topologically, residues 367–444 (LSGKFREEFK…ANGAGPLQNW (78 aa)) are cytoplasmic.

It belongs to the G-protein coupled receptor 1 family.

Its subcellular location is the cell membrane. In terms of biological role, nonselective, high-affinity receptor for both orexin-A and orexin-B neuropeptides. Triggers an increase in cytoplasmic Ca(2+) levels in response to orexin-A binding. In Canis lupus familiaris (Dog), this protein is Orexin receptor type 2 (HCRTR2).